The sequence spans 308 residues: Serine/threonine-protein phosphatase 4 catalytic subunit (308 aa).

Mn(2+) contacts are provided by Asp-51, His-53, Asp-79, and Asn-111. His-112 functions as the Proton donor in the catalytic mechanism. The Mn(2+) site is built by His-161 and His-235. A Leucine methyl ester modification is found at Leu-308.

This sequence belongs to the PPP phosphatase family. PP-4 (PP-X) subfamily. In terms of assembly, catalytic subunit of the histone H2A phosphatase complex (HTP-C) containing PPH3, PSY2 and PSY4. Mn(2+) is required as a cofactor.

It is found in the cytoplasm. It localises to the nucleus. It carries out the reaction O-phospho-L-seryl-[protein] + H2O = L-seryl-[protein] + phosphate. The catalysed reaction is O-phospho-L-threonyl-[protein] + H2O = L-threonyl-[protein] + phosphate. Its function is as follows. Forms the histone H2A phosphatase complex in association with the regulatory subunits PSY2 and PSY4, which dephosphorylates H2AS128ph (gamma-H2A) that has been displaced from sites of DNA lesions in the double-stranded DNA break repair process. Dephosphorylation is necessary for efficient recovery from the DNA damage checkpoint. This chain is Serine/threonine-protein phosphatase 4 catalytic subunit (PPH3), found in Kluyveromyces lactis (strain ATCC 8585 / CBS 2359 / DSM 70799 / NBRC 1267 / NRRL Y-1140 / WM37) (Yeast).